Here is a 474-residue protein sequence, read N- to C-terminus: Cysteine--tRNA ligase (474 aa).

Residue C29 participates in Zn(2+) binding. The short motif at 31–41 is the 'HIGH' region element; that stretch reads ITPYDHVHVGH. C215, H240, and E244 together coordinate Zn(2+). The short motif at 273 to 277 is the 'KMSKS' region element; the sequence is KMSKS. K276 contacts ATP.

The protein belongs to the class-I aminoacyl-tRNA synthetase family. Zn(2+) is required as a cofactor.

The protein localises to the cytoplasm. It carries out the reaction tRNA(Cys) + L-cysteine + ATP = L-cysteinyl-tRNA(Cys) + AMP + diphosphate. The chain is Cysteine--tRNA ligase from Pyrobaculum aerophilum (strain ATCC 51768 / DSM 7523 / JCM 9630 / CIP 104966 / NBRC 100827 / IM2).